Consider the following 451-residue polypeptide: uncharacterized protein (451 aa).

In terms of domain architecture, HD spans 50–147 (RFEHSLGTMF…DVDADRMDYL (98 aa)).

This is an uncharacterized protein from Methanocaldococcus jannaschii (strain ATCC 43067 / DSM 2661 / JAL-1 / JCM 10045 / NBRC 100440) (Methanococcus jannaschii).